Here is a 291-residue protein sequence, read N- to C-terminus: MGGDNTLNDFRHIPRKRFGQHWLKDQGVLDQIVKAAELNPEDCVLEVGPGKGALTEKLIESQARFIQAIELDRDLVVGLKKRFSHQNKFSLREGDILSAPLDAENGLTINKVVANIPYNITGPLLKRLIGELRKAPDNCFETLVLLMQKEVAQRLLARPGTSNFSALSVRIQLLAKCQDVCDVPSKCFQPAPKVDSKVVMIKPFASIDPDFYEVGNLLEKLLKHAFAGRRKKLRNTIGSFVTSNDQIKEFFAYRGISLDQRPQEISPSNWFGLAKALKETCVIENGTFQSK.

S-adenosyl-L-methionine contacts are provided by His21, Leu23, Gly48, Glu70, Asp95, and Asn115.

The protein belongs to the class I-like SAM-binding methyltransferase superfamily. rRNA adenine N(6)-methyltransferase family. RsmA subfamily.

Its subcellular location is the cytoplasm. It catalyses the reaction adenosine(1518)/adenosine(1519) in 16S rRNA + 4 S-adenosyl-L-methionine = N(6)-dimethyladenosine(1518)/N(6)-dimethyladenosine(1519) in 16S rRNA + 4 S-adenosyl-L-homocysteine + 4 H(+). Its function is as follows. Specifically dimethylates two adjacent adenosines (A1518 and A1519) in the loop of a conserved hairpin near the 3'-end of 16S rRNA in the 30S particle. May play a critical role in biogenesis of 30S subunits. The sequence is that of Ribosomal RNA small subunit methyltransferase A from Prochlorococcus marinus (strain NATL2A).